The following is a 378-amino-acid chain: Succinyl-diaminopimelate desuccinylase 2 (378 aa).

A Zn(2+)-binding site is contributed by His68. The active site involves Asp70. Asp101 lines the Zn(2+) pocket. Glu135 serves as the catalytic Proton acceptor. Residues Glu136, Glu164, and His350 each coordinate Zn(2+).

Belongs to the peptidase M20A family. DapE subfamily. In terms of assembly, homodimer. Requires Zn(2+) as cofactor. The cofactor is Co(2+).

It catalyses the reaction N-succinyl-(2S,6S)-2,6-diaminopimelate + H2O = (2S,6S)-2,6-diaminopimelate + succinate. The protein operates within amino-acid biosynthesis; L-lysine biosynthesis via DAP pathway; LL-2,6-diaminopimelate from (S)-tetrahydrodipicolinate (succinylase route): step 3/3. In terms of biological role, catalyzes the hydrolysis of N-succinyl-L,L-diaminopimelic acid (SDAP), forming succinate and LL-2,6-diaminopimelate (DAP), an intermediate involved in the bacterial biosynthesis of lysine and meso-diaminopimelic acid, an essential component of bacterial cell walls. This Alteromonas mediterranea (strain DSM 17117 / CIP 110805 / LMG 28347 / Deep ecotype) protein is Succinyl-diaminopimelate desuccinylase 2.